A 220-amino-acid polypeptide reads, in one-letter code: Cytidylate kinase (220 aa).

11–19 contributes to the ATP binding site; it reads GPTASGKGT.

It belongs to the cytidylate kinase family. Type 1 subfamily.

It is found in the cytoplasm. The catalysed reaction is CMP + ATP = CDP + ADP. It catalyses the reaction dCMP + ATP = dCDP + ADP. This is Cytidylate kinase from Polynucleobacter asymbioticus (strain DSM 18221 / CIP 109841 / QLW-P1DMWA-1) (Polynucleobacter necessarius subsp. asymbioticus).